The sequence spans 351 residues: MQVEVKLKENAYKVYIDELEELEFDSKVFILSNPKISGLHLKTLLSKIKAREIFIAAVKDGEEYKNLSTMEEILNQMFNSKLDRKSVLISFGGGVISDMGGFAASIYQRGIDFINIPTTLLACVDAAVGGKTGVNNNFGKNLIGTFYQPKAVYCESSFLKTLSSRELAAGMAEFIKMAAMFDDSILDFIEKIDEKSFLNATCENEIFTQIIARSIELKSRVVEQDEKESGLRMLLNYGHTFAHVIENFTDYKLYLHGEAVAIGMVMANQLALNLGFLDKMQSQKIKDILLKFGLPISYKINNVDEFYEAFFMDKKSSNKKINFVLAGPLGKGLIKGDISKEDIIATLREFQ.

NAD(+)-binding positions include 60 to 65 (DGEEYK), 94 to 98 (GVISD), 118 to 119 (TT), K131, K140, and 158 to 161 (FLKT). 3 residues coordinate Zn(2+): E173, H239, and H256.

This sequence belongs to the sugar phosphate cyclases superfamily. Dehydroquinate synthase family. The cofactor is Co(2+). Zn(2+) serves as cofactor. Requires NAD(+) as cofactor.

It localises to the cytoplasm. The enzyme catalyses 7-phospho-2-dehydro-3-deoxy-D-arabino-heptonate = 3-dehydroquinate + phosphate. Its pathway is metabolic intermediate biosynthesis; chorismate biosynthesis; chorismate from D-erythrose 4-phosphate and phosphoenolpyruvate: step 2/7. Catalyzes the conversion of 3-deoxy-D-arabino-heptulosonate 7-phosphate (DAHP) to dehydroquinate (DHQ). This chain is 3-dehydroquinate synthase, found in Campylobacter jejuni subsp. jejuni serotype O:6 (strain 81116 / NCTC 11828).